A 226-amino-acid polypeptide reads, in one-letter code: Ribonuclease HII (226 aa).

An RNase H type-2 domain is found at 24–216 (QRLCGVDEAG…VRKVLERGMV (193 aa)). A divalent metal cation-binding residues include Asp-30, Glu-31, and Asp-125.

It belongs to the RNase HII family. The cofactor is Mn(2+). Mg(2+) is required as a cofactor.

The protein localises to the cytoplasm. The enzyme catalyses Endonucleolytic cleavage to 5'-phosphomonoester.. Its function is as follows. Endonuclease that specifically degrades the RNA of RNA-DNA hybrids. This Cupriavidus metallidurans (strain ATCC 43123 / DSM 2839 / NBRC 102507 / CH34) (Ralstonia metallidurans) protein is Ribonuclease HII.